The chain runs to 377 residues: Palmitoyltransferase ZDHHC16 (377 aa).

Residues 1–77 are Cytoplasmic-facing; the sequence is MRGQRSLLLG…VYWLVDNVIR (77 aa). A helical transmembrane segment spans residues 78 to 98; sequence WFGVVFVVLVIVLTGSIVAIA. Topologically, residues 99–116 are lumenal; it reads YLCVLPLILRTYSVPRLC. A helical membrane pass occupies residues 117–137; it reads WHFFYSHWNLILIVFHYYQAI. Residues 138 to 198 are Cytoplasmic-facing; sequence TTPPGYPPQG…NNCVGHYNHR (61 aa). A DHHC domain is found at 155 to 205; the sequence is SICKKCIYPKPARTHHCSICNRCVLKMDHHCPWLNNCVGHYNHRYFFSFCF. Cysteine 185 functions as the S-palmitoyl cysteine intermediate in the catalytic mechanism. The chain crosses the membrane as a helical span at residues 199-219; the sequence is YFFSFCFFMTLGCVYCSYGSW. Residues 220 to 266 lie on the Lumenal side of the membrane; the sequence is DLFREAYAAIEKMKQLDKNKLQAVANQTYHQTPPPIFSFRERMTHKS. The chain crosses the membrane as a helical span at residues 267-287; that stretch reads LVYLWFLCSSVALALGALTVW. Topologically, residues 288-377 are cytoplasmic; it reads HAVLISRGET…TAHSASVMAV (90 aa).

Belongs to the DHHC palmitoyltransferase family. In terms of assembly, interacts with ABL1. Interacts with COPS5/JAB1.

The protein localises to the endoplasmic reticulum membrane. It carries out the reaction L-cysteinyl-[protein] + hexadecanoyl-CoA = S-hexadecanoyl-L-cysteinyl-[protein] + CoA. Palmitoyl acyltransferase that mediates palmitoylation of proteins such as PLN and ZDHHC6. Required during embryonic heart development and cardiac function, possibly by mediating palmitoylation of PLN, thereby affecting PLN phosphorylation and homooligomerization. Also required for eye development. Palmitoylates ZDHHC6, affecting the quaternary assembly of ZDHHC6, its localization, stability and function. May play a role in DNA damage response. May be involved in apoptosis regulation. Involved in the proliferation of neural stem cells by regulating the FGF/ERK pathway. This is Palmitoyltransferase ZDHHC16 from Macaca fascicularis (Crab-eating macaque).